A 263-amino-acid polypeptide reads, in one-letter code: uncharacterized protein (263 aa).

Belongs to the AtsA family.

The protein resides in the plastid. It is found in the chloroplast. This is an uncharacterized protein from Porphyra purpurea (Red seaweed).